The sequence spans 413 residues: Probable alpha-amylase 2 (413 aa).

Residues 74–75 and 191–196 each bind substrate; these read YL and RFDFAR. Asp-193 functions as the Nucleophile in the catalytic mechanism. Residue Glu-218 is the Proton donor of the active site. Residues Trp-220, Ser-222, Gln-239, Asp-246, Lys-280, 286–288, His-299, Gln-305, Lys-386, and Trp-411 each bind substrate; that span reads GWW.

The protein belongs to the glycosyl hydrolase 13 family. The cofactor is Ca(2+). As to expression, expressed in developing siliques.

Its subcellular location is the cytoplasm. The protein localises to the cytosol. The catalysed reaction is Endohydrolysis of (1-&gt;4)-alpha-D-glucosidic linkages in polysaccharides containing three or more (1-&gt;4)-alpha-linked D-glucose units.. Its function is as follows. Probable alpha-amylase that does not seem to be required for breakdown of transitory starch in leaves. The chain is Probable alpha-amylase 2 (AMY2) from Arabidopsis thaliana (Mouse-ear cress).